The primary structure comprises 276 residues: Formamidopyrimidine-DNA glycosylase (276 aa).

The active-site Schiff-base intermediate with DNA is the P2. The Proton donor role is filled by E3. K58 acts as the Proton donor; for beta-elimination activity in catalysis. Residues H92, R111, and R154 each coordinate DNA. The FPG-type zinc finger occupies 239 to 273 (HAYQRTGDPCERCGTPIQRIVVGQRGTHFCPKCQV). R263 (proton donor; for delta-elimination activity) is an active-site residue.

It belongs to the FPG family. As to quaternary structure, monomer. It depends on Zn(2+) as a cofactor.

It catalyses the reaction Hydrolysis of DNA containing ring-opened 7-methylguanine residues, releasing 2,6-diamino-4-hydroxy-5-(N-methyl)formamidopyrimidine.. It carries out the reaction 2'-deoxyribonucleotide-(2'-deoxyribose 5'-phosphate)-2'-deoxyribonucleotide-DNA = a 3'-end 2'-deoxyribonucleotide-(2,3-dehydro-2,3-deoxyribose 5'-phosphate)-DNA + a 5'-end 5'-phospho-2'-deoxyribonucleoside-DNA + H(+). Involved in base excision repair of DNA damaged by oxidation or by mutagenic agents. Acts as a DNA glycosylase that recognizes and removes damaged bases. Has a preference for oxidized purines, such as 7,8-dihydro-8-oxoguanine (8-oxoG). Has AP (apurinic/apyrimidinic) lyase activity and introduces nicks in the DNA strand. Cleaves the DNA backbone by beta-delta elimination to generate a single-strand break at the site of the removed base with both 3'- and 5'-phosphates. This is Formamidopyrimidine-DNA glycosylase from Ligilactobacillus salivarius (strain UCC118) (Lactobacillus salivarius).